Consider the following 197-residue polypeptide: Female-specific protein transformer (197 aa).

Basic and acidic residues-rich tracts occupy residues 1–17 (MKMDADSSGTQHRDSRG) and 24–39 (REREYHGRSSERDSRK). Disordered regions lie at residues 1–136 (MKMD…PKII) and 158–197 (GYQRLPRPPPFPPAPYRYRQRPPFIGVPRFGYRNAGRPPY). Basic residues-rich tracts occupy residues 58 to 75 (RRLRQRAHQSTRRTRSRS) and 84 to 127 (SRHR…RSPH). Residues 163–172 (PRPPPFPPAP) are compositionally biased toward pro residues.

The protein resides in the nucleus speckle. Functionally, member of the regulatory pathway controlling female somatic sexual differentiation, regulated by Sxl. Activates dsx female-specific splicing by promoting the formation of a splicing enhancer complex which consists of tra, tra2 and sr proteins. Together with tra-2, plays a role in switching fru splicing from the male-specific pattern to the female-specific pattern through activation of the female-specific fru 5'-splice site. No known function in males. In Drosophila melanogaster (Fruit fly), this protein is Female-specific protein transformer (tra).